The following is a 739-amino-acid chain: Catalase-peroxidase 1 (739 aa).

The segment at methionine 1–lysine 33 is disordered. A cross-link (tryptophyl-tyrosyl-methioninium (Trp-Tyr) (with M-262)) is located at residues tryptophan 113–tyrosine 236. Histidine 114 (proton acceptor) is an active-site residue. Positions tyrosine 236–methionine 262 form a cross-link, tryptophyl-tyrosyl-methioninium (Tyr-Met) (with W-113). Heme b is bound at residue histidine 277.

Belongs to the peroxidase family. Peroxidase/catalase subfamily. In terms of assembly, homodimer or homotetramer. Heme b is required as a cofactor. Formation of the three residue Trp-Tyr-Met cross-link is important for the catalase, but not the peroxidase activity of the enzyme.

The enzyme catalyses H2O2 + AH2 = A + 2 H2O. It catalyses the reaction 2 H2O2 = O2 + 2 H2O. Bifunctional enzyme with both catalase and broad-spectrum peroxidase activity. May play a role in the intracellular survival of mycobacteria. The chain is Catalase-peroxidase 1 from Mycolicibacterium smegmatis (strain ATCC 700084 / mc(2)155) (Mycobacterium smegmatis).